The sequence spans 154 residues: Myoglobin (154 aa).

One can recognise a Globin domain in the interval 2 to 148 (GLSDGEWQLV…FRNDMAAQYK (147 aa)). S4 is subject to Phosphoserine. Position 65 (H65) interacts with nitrite. An O2-binding site is contributed by H65. The residue at position 68 (T68) is a Phosphothreonine. H94 provides a ligand contact to heme b.

This sequence belongs to the globin family. Monomeric.

It is found in the cytoplasm. Its subcellular location is the sarcoplasm. The enzyme catalyses Fe(III)-heme b-[protein] + nitric oxide + H2O = Fe(II)-heme b-[protein] + nitrite + 2 H(+). It carries out the reaction H2O2 + AH2 = A + 2 H2O. Monomeric heme protein which primary function is to store oxygen and facilitate its diffusion within muscle tissues. Reversibly binds oxygen through a pentacoordinated heme iron and enables its timely and efficient release as needed during periods of heightened demand. Depending on the oxidative conditions of tissues and cells, and in addition to its ability to bind oxygen, it also has a nitrite reductase activity whereby it regulates the production of bioactive nitric oxide. Under stress conditions, like hypoxia and anoxia, it also protects cells against reactive oxygen species thanks to its pseudoperoxidase activity. This is Myoglobin (MB) from Bos mutus grunniens (Wild yak).